Reading from the N-terminus, the 59-residue chain is Large ribosomal subunit protein bL32 (59 aa).

A compositionally biased stretch (basic residues) spans 1–16 (MAVPKRKVSPHRRGNR). A disordered region spans residues 1-20 (MAVPKRKVSPHRRGNRRAHD).

Belongs to the bacterial ribosomal protein bL32 family.

This chain is Large ribosomal subunit protein bL32, found in Erythrobacter litoralis (strain HTCC2594).